The chain runs to 131 residues: Small ribosomal subunit protein uS8 (131 aa).

This sequence belongs to the universal ribosomal protein uS8 family. Part of the 30S ribosomal subunit. Contacts proteins S5 and S12.

Its function is as follows. One of the primary rRNA binding proteins, it binds directly to 16S rRNA central domain where it helps coordinate assembly of the platform of the 30S subunit. This Albidiferax ferrireducens (strain ATCC BAA-621 / DSM 15236 / T118) (Rhodoferax ferrireducens) protein is Small ribosomal subunit protein uS8.